Here is a 429-residue protein sequence, read N- to C-terminus: MSAPQAAIDTDHADRHGPRRAWAAVGVLALVGTLNYVDRFLPSVLAEPIKHDLELSDTAIGVINGFGFLIVYAVMGIAVARVADRGAFGAVVAGCLTLWGTMTMLGGAVQSGFQLALTRVGVAIGEAGSTPAAHAYVARNFVPQRRSAPLAVITIAIPLASTASLLGGGLLAQSLGWRTAFVIMGAVSVVLAPLVLLVVGVRQSLPAAPAVVDKTAGGWWNLLRKPSFLIVVAGTAFISAAGYSLTTFSPAFLMRTRGMSLGEVGVEYGLATGAIGVLGLLIVGRLADRLAERDPRWLLWIVVTLTLVLLPASVLAFVVEDRMLCVLFLALSYAIGTSYLAPSIAAIQRLVLPEQRATASAMFLFFNAVFGSVGPFVVGMLSDSLTDDLGAQALGRALLLLVAAMQLVGAICYWLASARYRRDIIEEAR.

12 consecutive transmembrane segments (helical) span residues 21 to 41, 59 to 79, 86 to 106, 115 to 137, 150 to 170, 181 to 201, 228 to 248, 264 to 284, 299 to 319, 327 to 347, 361 to 381, and 397 to 417; these read AWAA…DRFL, AIGV…GIAV, GAFG…TMLG, LALT…HAYV, LAVI…GGGL, FVIM…VVGV, FLIV…LTTF, VGVE…LIVG, LWIV…AFVV, LFLA…IAAI, AMFL…VGML, and ALLL…WLAS.

This sequence belongs to the major facilitator superfamily.

The protein localises to the cell inner membrane. Functionally, probably plays a role in bacterial growth and resistance to antibiotics. The sequence is that of MFS-type efflux pump MSMEG_3705 from Mycolicibacterium smegmatis (strain ATCC 700084 / mc(2)155) (Mycobacterium smegmatis).